We begin with the raw amino-acid sequence, 261 residues long: UPF0246 protein azo1887 (261 aa).

It belongs to the UPF0246 family.

The protein is UPF0246 protein azo1887 of Azoarcus sp. (strain BH72).